We begin with the raw amino-acid sequence, 84 residues long: Putative membrane protein insertion efficiency factor (84 aa).

Positions 63-84 (GEDPVPNHFTLRRNKKEKPSKS) are disordered.

The protein belongs to the UPF0161 family.

It is found in the cell membrane. Its function is as follows. Could be involved in insertion of integral membrane proteins into the membrane. The polypeptide is Putative membrane protein insertion efficiency factor (Streptococcus mutans serotype c (strain ATCC 700610 / UA159)).